We begin with the raw amino-acid sequence, 421 residues long: Phosphatidylinositol 5-phosphate 4-kinase type-2 gamma (421 aa).

A2 carries the N-acetylalanine modification. S26 is subject to Phosphoserine. The 378-residue stretch at 43 to 420 (AADPLVGVFL…RFLDFITNIF (378 aa)) folds into the PIPK domain. The interval 69-75 (VMLLPDD) is required for interaction with PIP5K1A. A Phosphoserine modification is found at S349.

Interacts with PIP5K1A; the interaction inhibits PIP5K1A kinase activity. Post-translationally, phosphorylated, phosphorylation is induced by EGF.

It localises to the endoplasmic reticulum. Its subcellular location is the cytoplasm. The catalysed reaction is a 1,2-diacyl-sn-glycero-3-phospho-(1D-myo-inositol-5-phosphate) + ATP = a 1,2-diacyl-sn-glycero-3-phospho-(1D-myo-inositol-4,5-bisphosphate) + ADP + H(+). It catalyses the reaction 1,2-dihexadecanoyl-sn-glycero-3-phospho-(1D-myo-inositol-5-phosphate) + ATP = 1,2-dihexadecanoyl-sn-glycero-3-phospho-(1D-myo-inositol-4,5-bisphosphate) + ADP + H(+). The enzyme catalyses 1,2-dihexadecanoyl-sn-glycero-3-phospho-(1D-myo-inositol-5-phosphate) + GTP = 1,2-dihexadecanoyl-sn-glycero-3-phospho-(1D-myo-inositol-4,5-bisphosphate) + GDP + H(+). Phosphatidylinositol 5-phosphate 4-kinase with low enzymatic activity. May be a GTP sensor, has higher GTP-dependent kinase activity than ATP-dependent kinase activity. PIP4Ks negatively regulate insulin signaling through a catalytic-independent mechanism. They interact with PIP5Ks and suppress PIP5K-mediated PtdIns(4,5)P2 synthesis and insulin-dependent conversion to PtdIns(3,4,5)P3. This is Phosphatidylinositol 5-phosphate 4-kinase type-2 gamma from Homo sapiens (Human).